A 459-amino-acid chain; its full sequence is uncharacterized protein (459 aa).

2 helical membrane passes run Ile53–Leu75 and Ala111–Ala133. The tract at residues His174–Asn196 is disordered.

It is found in the cell membrane. This is an uncharacterized protein from Treponema pallidum (strain Nichols).